A 505-amino-acid chain; its full sequence is MAKAATPKETAAVKKPAAPKKAATAKTTAVVATGAVGRVTQVIGAVVDVAFEEGQLPQILNALETDNKGNRLVLEVAQHLGENAVRTIAMDSTEGLVRGQSVTDTGGPISVPVGKETLGRIMNVIGEPVDEAGPVETSSRRAIHQDAPAYVEQSTEAQILVTGIKVVDLLAPYAKGGKIGLFGGAGVGKTVLIMELINNVAKAHGGYSVFAGVGERTREGNDLYHEMIESGVNKHGGGEGSKAALVYGQMNEPPGARARVALTGLTIAEHFRDEGQDVLFFVDNIFRFTQAGSEVSALLGRIPSAVGYQPTLATDMGQMQERITTTTKGSITSVQAIYVPADDLTDPAPATSFAHLDATTVLSRSIAEKGIYPAVDPLDSTSRMLDPMIVGEEHYEVSRKVQSTLQRYKALQDIIAILGMDELSEEDKVAVARARKIERFLSQPFFVAEVFTGSPGKLVALEDTIKGFKGLVNGEYDHLPEAAFYMVGSIDEAIEKAKKLAAEAA.

Positions 1 to 25 (MAKAATPKETAAVKKPAAPKKAATA) are disordered. 183–190 (GGAGVGKT) provides a ligand contact to ATP.

This sequence belongs to the ATPase alpha/beta chains family. In terms of assembly, F-type ATPases have 2 components, CF(1) - the catalytic core - and CF(0) - the membrane proton channel. CF(1) has five subunits: alpha(3), beta(3), gamma(1), delta(1), epsilon(1). CF(0) has three main subunits: a(1), b(2) and c(9-12). The alpha and beta chains form an alternating ring which encloses part of the gamma chain. CF(1) is attached to CF(0) by a central stalk formed by the gamma and epsilon chains, while a peripheral stalk is formed by the delta and b chains.

Its subcellular location is the cell inner membrane. The catalysed reaction is ATP + H2O + 4 H(+)(in) = ADP + phosphate + 5 H(+)(out). Its function is as follows. Produces ATP from ADP in the presence of a proton gradient across the membrane. The catalytic sites are hosted primarily by the beta subunits. The chain is ATP synthase subunit beta from Sinorhizobium fredii (strain NBRC 101917 / NGR234).